The sequence spans 201 residues: Small ribosomal subunit protein uS2 (201 aa).

This sequence belongs to the universal ribosomal protein uS2 family.

This is Small ribosomal subunit protein uS2 from Nanoarchaeum equitans (strain Kin4-M).